The following is a 176-amino-acid chain: Ribosome rescue factor SmrB (176 aa).

The segment at 29–51 is disordered; it reads TIIQQPKKNTKQKEIKRSNREAS. Basic and acidic residues predominate over residues 39-51; that stretch reads KQKEIKRSNREAS. The 76-residue stretch at 97-172 folds into the Smr domain; the sequence is LDMHGMTQQE…GDGALLVLLS (76 aa).

Belongs to the SmrB family. As to quaternary structure, associates with collided ribosomes, but not with correctly translating polysomes.

Its function is as follows. Acts as a ribosome collision sensor. Detects stalled/collided disomes (pairs of ribosomes where the leading ribosome is stalled and a second ribosome has collided with it) and endonucleolytically cleaves mRNA at the 5' boundary of the stalled ribosome. Stalled/collided disomes form a new interface (primarily via the 30S subunits) that binds SmrB. Cleaved mRNA becomes available for tmRNA ligation, leading to ribosomal subunit dissociation and rescue of stalled ribosomes. The sequence is that of Ribosome rescue factor SmrB from Vibrio parahaemolyticus serotype O3:K6 (strain RIMD 2210633).